Reading from the N-terminus, the 194-residue chain is E3 ubiquitin-protein ligase RNF185 (194 aa).

Residues 1–32 (MASKGPTTSASTKSSSTGGTSGSSSSNGAGDN) are disordered. A required for ubiquitin ligase activity and protection against ER stress-induced cell death region spans residues 31-82 (DNTNQDNTFECNICLDTAKDAVISLCGHLFCWPCLHQWLETRPNRQVCPVCK). The segment at 41 to 82 (CNICLDTAKDAVISLCGHLFCWPCLHQWLETRPNRQVCPVCK) adopts an RING-type zinc-finger fold. The disordered stretch occupies residues 92-125 (PLYGRGSTGQQDPREKTPPRPQGQRPEPENRGGF). The next 2 helical transmembrane spans lie at 133 to 153 (GGFQMSFGIGAFPFGIFATAF) and 174 to 194 (QFLSRLFLFVALVIMFWLLIA).

It localises to the mitochondrion outer membrane. The protein resides in the endoplasmic reticulum membrane. It carries out the reaction S-ubiquitinyl-[E2 ubiquitin-conjugating enzyme]-L-cysteine + [acceptor protein]-L-lysine = [E2 ubiquitin-conjugating enzyme]-L-cysteine + N(6)-ubiquitinyl-[acceptor protein]-L-lysine.. The protein operates within protein modification; protein ubiquitination. Its function is as follows. E3 ubiquitin-protein ligase that regulates selective mitochondrial autophagy by mediating 'Lys-63'-linked polyubiquitination. Acts in the endoplasmic reticulum (ER)-associated degradation (ERAD) pathway, which targets misfolded proteins that accumulate in the endoplasmic reticulum (ER) for ubiquitination and subsequent proteasome-mediated degradation. Protects cells from ER stress-induced apoptosis. Responsible for the cotranslational ubiquitination and degradation of CFTR in the ERAD pathway. Also acts as a regulator of the innate antiviral response by catalyzing 'Lys-27'-linked polyubiquitination of CGAS, thereby promoting CGAS cyclic GMP-AMP synthase activity. Preferentially associates with the E2 enzymes UBE2J1 and UBE2J2. The chain is E3 ubiquitin-protein ligase RNF185 (RNF185) from Gallus gallus (Chicken).